A 68-amino-acid polypeptide reads, in one-letter code: Protein SlyX homolog (68 aa).

The protein belongs to the SlyX family.

The sequence is that of Protein SlyX homolog from Brucella melitensis biotype 1 (strain ATCC 23456 / CCUG 17765 / NCTC 10094 / 16M).